The following is a 208-amino-acid chain: Ubiquitin-conjugating enzyme E2 S (208 aa).

The UBC core domain maps to 14 to 160 (QTIRQVMKEL…ARMMTEIHAQ (147 aa)). Catalysis depends on C98, which acts as the Glycyl thioester intermediate. Residues 161 to 193 (PAKCGAGASDAKDDDGPSTKKHAGLDKKLQDKK) form a disordered region. The span at 170-193 (DAKDDDGPSTKKHAGLDKKLQDKK) shows a compositional bias: basic and acidic residues.

The protein belongs to the ubiquitin-conjugating enzyme family.

It catalyses the reaction S-ubiquitinyl-[E1 ubiquitin-activating enzyme]-L-cysteine + [E2 ubiquitin-conjugating enzyme]-L-cysteine = [E1 ubiquitin-activating enzyme]-L-cysteine + S-ubiquitinyl-[E2 ubiquitin-conjugating enzyme]-L-cysteine.. It functions in the pathway protein modification; protein ubiquitination. Functionally, catalyzes the covalent attachment of ubiquitin to other proteins. Acts as an essential factor of the anaphase promoting complex/cyclosome (APC/C), a cell cycle-regulated ubiquitin ligase that controls progression through mitosis. Acts by specifically elongating polyubiquitin chains initiated by the E2 enzyme vih/UbcH10 on APC/C substrates, enhancing the degradation of APC/C substrates by the proteasome and promoting mitotic exit. The protein is Ubiquitin-conjugating enzyme E2 S of Drosophila virilis (Fruit fly).